The primary structure comprises 568 residues: 2-succinyl-5-enolpyruvyl-6-hydroxy-3-cyclohexene-1-carboxylate synthase (568 aa).

Belongs to the TPP enzyme family. MenD subfamily. In terms of assembly, homodimer. Requires Mg(2+) as cofactor. The cofactor is Mn(2+). Thiamine diphosphate is required as a cofactor.

It carries out the reaction isochorismate + 2-oxoglutarate + H(+) = 5-enolpyruvoyl-6-hydroxy-2-succinyl-cyclohex-3-ene-1-carboxylate + CO2. It participates in quinol/quinone metabolism; 1,4-dihydroxy-2-naphthoate biosynthesis; 1,4-dihydroxy-2-naphthoate from chorismate: step 2/7. It functions in the pathway quinol/quinone metabolism; menaquinone biosynthesis. Catalyzes the thiamine diphosphate-dependent decarboxylation of 2-oxoglutarate and the subsequent addition of the resulting succinic semialdehyde-thiamine pyrophosphate anion to isochorismate to yield 2-succinyl-5-enolpyruvyl-6-hydroxy-3-cyclohexene-1-carboxylate (SEPHCHC). This chain is 2-succinyl-5-enolpyruvyl-6-hydroxy-3-cyclohexene-1-carboxylate synthase, found in Actinobacillus pleuropneumoniae serotype 3 (strain JL03).